The following is a 332-amino-acid chain: COP9 signalosome complex subunit 5 (332 aa).

The MPN domain occupies 54-191; sequence VKISAIALLK…IGAFRTYPQG (138 aa). Residues H137, H139, and D150 each contribute to the Zn(2+) site. The short motif at 137 to 150 is the JAMM motif element; that stretch reads HSHPGYGCWLSGID.

This sequence belongs to the peptidase M67A family. CSN5 subfamily. In terms of assembly, component of the CSN complex. The holocomplex is comprised of 8 subunits csn1-8. In the complex, it probably interacts directly with csn1, csn2, csn3, csn4, csn6 and csn8. The cofactor is a divalent metal cation.

Its subcellular location is the cytoplasm. It is found in the nucleus. Functionally, probable protease subunit of the COP9 signalosome complex (CSN), a complex involved in various cellular and developmental processes. The CSN complex is an essential regulator of the ubiquitin (Ubl) conjugation pathway by mediating the deneddylation of the cullin subunits of E3 ligasew complexes, leading to modify the Ubl ligase activity. In the complex, it probably acts as the catalytic center that mediates the cleavage of Nedd8 from cullins. Csn5 is essential for growth or survival. The sequence is that of COP9 signalosome complex subunit 5 (csn5) from Dictyostelium discoideum (Social amoeba).